A 145-amino-acid chain; its full sequence is Protein SprT-like (145 aa).

Residues 5 to 141 (NYVKQVSVED…CGRCMGKLRL (137 aa)) enclose the SprT-like domain. Residue H64 participates in Zn(2+) binding. The active site involves E65. H68 contacts Zn(2+).

This sequence belongs to the SprT family. Requires Zn(2+) as cofactor.

It localises to the cytoplasm. The protein is Protein SprT-like of Streptococcus sanguinis (strain SK36).